Consider the following 109-residue polypeptide: Large ribosomal subunit protein uL22 (109 aa).

The protein belongs to the universal ribosomal protein uL22 family. In terms of assembly, part of the 50S ribosomal subunit.

Functionally, this protein binds specifically to 23S rRNA; its binding is stimulated by other ribosomal proteins, e.g. L4, L17, and L20. It is important during the early stages of 50S assembly. It makes multiple contacts with different domains of the 23S rRNA in the assembled 50S subunit and ribosome. Its function is as follows. The globular domain of the protein is located near the polypeptide exit tunnel on the outside of the subunit, while an extended beta-hairpin is found that lines the wall of the exit tunnel in the center of the 70S ribosome. The polypeptide is Large ribosomal subunit protein uL22 (Ralstonia nicotianae (strain ATCC BAA-1114 / GMI1000) (Ralstonia solanacearum)).